Here is a 167-residue protein sequence, read N- to C-terminus: Thioredoxin M-type, chloroplastic (167 aa).

Residues 1–53 (MAMETCFRAWALHAPAGSKDRLLVGNLVLPSKRALAPLSVGRVATRRPRHVCQ) constitute a chloroplast transit peptide. The region spanning 54–165 (SKNAVDEVVV…LTTLIDKYIG (112 aa)) is the Thioredoxin domain. An intrachain disulfide couples Cys-89 to Cys-92.

It belongs to the thioredoxin family. Plant M-type subfamily. Forms a complex with heterodimeric ferredoxin-thioredoxin reductase (FTR) and ferredoxin.

The protein localises to the plastid. Its subcellular location is the chloroplast. In terms of biological role, participates in various redox reactions through the reversible oxidation of the active center dithiol to a disulfide. The M form is known to activate NADP-malate dehydrogenase. This Zea mays (Maize) protein is Thioredoxin M-type, chloroplastic (TRM1).